Here is a 164-residue protein sequence, read N- to C-terminus: Cyclic pyranopterin monophosphate synthase (164 aa).

Substrate contacts are provided by residues 75–77 and 116–117; these read MCH and ME. The active site involves Asp-131.

It belongs to the MoaC family. As to quaternary structure, homohexamer; trimer of dimers.

The enzyme catalyses (8S)-3',8-cyclo-7,8-dihydroguanosine 5'-triphosphate = cyclic pyranopterin phosphate + diphosphate. The protein operates within cofactor biosynthesis; molybdopterin biosynthesis. Catalyzes the conversion of (8S)-3',8-cyclo-7,8-dihydroguanosine 5'-triphosphate to cyclic pyranopterin monophosphate (cPMP). The chain is Cyclic pyranopterin monophosphate synthase from Staphylococcus aureus (strain MRSA252).